A 914-amino-acid polypeptide reads, in one-letter code: Serine/threonine-protein kinase MST20 (914 aa).

The segment covering 1–12 (MDGHSNFTQPSD) has biased composition (polar residues). Disordered stretches follow at residues 1–140 (MDGH…QLQN), 156–184 (NQYSAASHRRSNSYGHPHGPQSSNSLTFN), and 251–286 (AMSEKSQQVRGMEAQLPTSKRYSDETKEPKPGVLRK). Composition is skewed to low complexity over residues 13–26 (TSHASHTIPSSSSS), 63–72 (RSSTSLRRAP), and 79–97 (TPTSTHASNSSSPRNPSSS). The segment covering 122–136 (ARDRDSDPARNDHGH) has biased composition (basic and acidic residues). Positions 156–166 (NQYSAASHRRS) are enriched in basic residues. The segment covering 175–184 (PQSSNSLTFN) has biased composition (polar residues). Residues 271–280 (RYSDETKEPK) show a composition bias toward basic and acidic residues. In terms of domain architecture, CRIB spans 306 to 319 (ISAPENPVHVTHVG). Positions 408-615 (SPMISPPASP…RHRSRQSNGL (208 aa)) are disordered. Composition is skewed to low complexity over residues 516 to 548 (AYPASQQSPAVQAAYQQQLMQQQQEQALAQAQA) and 562 to 576 (QPQAQQPTPPQSQHQ). Residues 577–586 (YSRPTDANGA) show a composition bias toward polar residues. Positions 587–596 (QQTQRPQQPQ) are enriched in low complexity. The Protein kinase domain occupies 634–885 (YRSFTKIGQG…AHDLLRHEFM (252 aa)). ATP-binding positions include 640–648 (IGQGASGGV) and K663. D753 (proton acceptor) is an active-site residue.

It belongs to the protein kinase superfamily. STE Ser/Thr protein kinase family. STE20 subfamily.

Its subcellular location is the cytoplasm. It localises to the nucleus. The catalysed reaction is L-seryl-[protein] + ATP = O-phospho-L-seryl-[protein] + ADP + H(+). It catalyses the reaction L-threonyl-[protein] + ATP = O-phospho-L-threonyl-[protein] + ADP + H(+). Its function is as follows. MAP4K component of the MAPK pathway required for the mating pheromone response and the regulation of cell polarity and cell cycle. Phosphorylates histone H2B to form H2BS10ph. Is involved in conidiation, aerial hyphal growth and infection-related morphogenesis. The protein is Serine/threonine-protein kinase MST20 (MST20) of Pyricularia oryzae (strain 70-15 / ATCC MYA-4617 / FGSC 8958) (Rice blast fungus).